A 312-amino-acid polypeptide reads, in one-letter code: Plasma membrane-associated coenzyme Q6 reductase PGA3 (312 aa).

Residues 1-15 are Extracellular-facing; that stretch reads MSKEDIEGTNILDEP. The helical transmembrane segment at 16-36 threads the bilayer; it reads VHGIYIPAALFVVGVAITTYM. The Cytoplasmic portion of the chain corresponds to 37 to 39; that stretch reads SGE. A helical membrane pass occupies residues 40–60; it reads LKILWSLPILFMIIFVRAYSA. Over 61-179 the chain is Extracellular; it reads YKRRRSLYPD…LNYEPNSSKH (119 aa). Residues 70–173 form the FAD-binding FR-type domain; the sequence is DRWTSLELED…KGPIGTLNYE (104 aa). FAD is bound by residues 153-168 and 179-211; these read AGLN…GPIG and HLGI…KVSL. The helical transmembrane segment at 180–200 threads the bilayer; it reads LGIVAGGSGITPVLQILNEII. Residues 201 to 312 are Cytoplasmic-facing; it reads TVPEDLTKVS…SSGDDQVFVF (112 aa).

This sequence belongs to the flavoprotein pyridine nucleotide cytochrome reductase family. Requires FAD as cofactor.

The protein resides in the cell membrane. It is found in the endoplasmic reticulum membrane. The catalysed reaction is 2 Fe(III)-[cytochrome b5] + NADH = 2 Fe(II)-[cytochrome b5] + NAD(+) + H(+). With respect to regulation, inhibited by diphenylene iodonium (DPI). Its function is as follows. NADH-dependent cytochrome b5 reductase that reduces coenzyme Q6 at the plasma membrane and mediates lifespan extension by calorie restriction by shifting fermentative to respiratory metabolism, probably through modulating the NAD(+)/NADH ratio. The polypeptide is Plasma membrane-associated coenzyme Q6 reductase PGA3 (PGA3) (Saccharomyces cerevisiae (strain ATCC 204508 / S288c) (Baker's yeast)).